A 447-amino-acid chain; its full sequence is UDP-N-acetylmuramoylalanine--D-glutamate ligase (447 aa).

112-118 (GTNGKST) provides a ligand contact to ATP.

The protein belongs to the MurCDEF family.

The protein resides in the cytoplasm. It carries out the reaction UDP-N-acetyl-alpha-D-muramoyl-L-alanine + D-glutamate + ATP = UDP-N-acetyl-alpha-D-muramoyl-L-alanyl-D-glutamate + ADP + phosphate + H(+). It participates in cell wall biogenesis; peptidoglycan biosynthesis. Cell wall formation. Catalyzes the addition of glutamate to the nucleotide precursor UDP-N-acetylmuramoyl-L-alanine (UMA). The polypeptide is UDP-N-acetylmuramoylalanine--D-glutamate ligase (Legionella pneumophila (strain Lens)).